A 962-amino-acid polypeptide reads, in one-letter code: Probable transport protein MmpL9 (962 aa).

Helical transmembrane passes span Leu25 to Val45, Leu201 to Thr223, Leu225 to Tyr247, Phe256 to Leu276, Ala302 to Ala322, Ala335 to Ile355, Trp383 to Pro403, Tyr768 to Ile788, Leu796 to Ile816, Phe820 to Val840, Ala867 to Ala887, and Arg895 to Val915.

Belongs to the resistance-nodulation-cell division (RND) (TC 2.A.6) family. MmpL subfamily.

Its subcellular location is the cell membrane. In Mycobacterium tuberculosis (strain ATCC 25618 / H37Rv), this protein is Probable transport protein MmpL9 (mmpL9).